A 132-amino-acid chain; its full sequence is Agouti-signaling protein (132 aa).

Residues 1–22 (MDVTRLLLATLLVFLCFFTACS) form the signal peptide. N-linked (GlcNAc...) asparagine glycosylation is present at N39. The interval 61–87 (QISRKEAEKKRSSKKEASMKKVARPRT) is disordered. Basic and acidic residues predominate over residues 63-79 (SRKEAEKKRSSKKEASM). Cystine bridges form between C93–C108, C100–C114, C107–C125, C111–C132, and C116–C123. The 40-residue stretch at 93–132 (CVATRDSCKPPAPACCDPCASCQCRFFRSACSCRVLSLNC) folds into the Agouti domain.

It is found in the secreted. Functionally, involved in the regulation of melanogenesis. The binding of ASP to MC1R precludes alpha-MSH initiated signaling and thus blocks production of cAMP, leading to a down-regulation of eumelanogenesis (brown/black pigment) and thus increasing synthesis of pheomelanin (yellow/red pigment). This Macaca nigrescens (Gorontalo macaque) protein is Agouti-signaling protein (ASIP).